The following is a 187-amino-acid chain: Nodulin-related protein 1 (187 aa).

Residue M1 is modified to N-acetylmethionine. Disordered regions lie at residues 1–66 (MDFF…ATNA) and 132–176 (YETS…HGFG). The span at 7 to 48 (QVKKKFSDKKPESSDPEPNHNKNKPGHTEPTTHKPGHGEPTT) shows a compositional bias: basic and acidic residues. The segment covering 142–158 (GGTGSHGNVGGHGGGAG) has biased composition (gly residues).

As to quaternary structure, interacts with RPS2. In terms of tissue distribution, expressed in roots, leaves, flowers and siliques.

Its function is as follows. Prevents accumulation of abscisic acid (ABA) after heat treatment, thus reducing thermotolerance. May be a negative regulator of the ABA signaling/synthesis pathway. Required for defense responses against avirulent bacteria such as P.syringae pv. tomato DC3000 (avrRpt2). This Arabidopsis thaliana (Mouse-ear cress) protein is Nodulin-related protein 1.